A 451-amino-acid chain; its full sequence is Glycylpeptide N-tetradecanoyltransferase (451 aa).

Residues 177–179 (LCI) and 185–189 (NKRLA) contribute to the tetradecanoyl-CoA site. The active-site Proton acceptor; via carboxylate is the Leu-451.

It belongs to the NMT family. In terms of assembly, monomer.

The protein resides in the cytoplasm. The catalysed reaction is N-terminal glycyl-[protein] + tetradecanoyl-CoA = N-tetradecanoylglycyl-[protein] + CoA + H(+). With respect to regulation, competitively inhibited by SC-58272, a peptidomimetic derived from the N-terminal sequence of a natural substrate. Adds a myristoyl group to the N-terminal glycine residue of certain cellular proteins. Substrate specificity requires an N-terminal glycine in the nascent polypeptide substrates. Ser is present at position 5 in almost all known N-myristoyl proteins and Lys is commonly encountered at postion 6. Basic residues are preferred at positions 7 and 8. This chain is Glycylpeptide N-tetradecanoyltransferase (NMT1), found in Candida albicans (strain SC5314 / ATCC MYA-2876) (Yeast).